Consider the following 553-residue polypeptide: Vacuolar fusion protein MON1 homolog B (553 aa).

Met1 carries the N-acetylmethionine modification. Disordered regions lie at residues 1–111 and 534–553; these read MEAG…DEDW and STPP…FTGL. Over residues 23–35 the composition is skewed to basic and acidic residues; that stretch reads FPREEAGDSERVH. Over residues 52–72 the composition is skewed to polar residues; sequence KDQPSSLLSPLPQTEAASSTC. At Ser57 the chain carries Phosphoserine. A compositionally biased stretch (low complexity) spans 78-95; it reads AAASDSSPPGEPESNSEG. The segment covering 96 to 108 has biased composition (acidic residues); it reads QGEDPDDGGDPSD. A compositionally biased stretch (polar residues) spans 541–553; it reads ADQAPNNGLFTGL.

It belongs to the MON1/SAND family. Interacts with CCNT2; down-regulates CCNT2-mediated activation of viral promoters during herpes simplex virus 1/HHV-1 infection. Found in a complex with RMC1, CCZ1 MON1A and MON1B.

The protein is Vacuolar fusion protein MON1 homolog B (Mon1b) of Mus musculus (Mouse).